The following is a 635-amino-acid chain: Probable monoacyl phosphatidylinositol tetramannoside-binding protein LpqW (635 aa).

The N-terminal stretch at 1–26 (MGVPSPVRRVCVTVGALVALACMVLA) is a signal peptide. Disordered regions lie at residues 32 to 52 (PPPA…PRRP), 389 to 412 (NTSV…GPPE), and 511 to 551 (NAPT…LVKA). Composition is skewed to low complexity over residues 390-411 (TSVS…TGPP) and 511-531 (NAPT…APDT).

The protein belongs to the bacterial solute-binding protein 5 family.

The protein operates within phospholipid metabolism; phosphatidylinositol metabolism. May directly or indirectly regulate the accessibility of the key branch point intermediate, monoacyl phosphatidylinositol tetramannoside (AcPIM4), to the elongating alpha-1,6 mannosyltransferases which could regulate the lipoarabinomannans (LAMs) biosynthesis. In Mycobacterium tuberculosis (strain CDC 1551 / Oshkosh), this protein is Probable monoacyl phosphatidylinositol tetramannoside-binding protein LpqW (lpqW).